The chain runs to 146 residues: uncharacterized protein (146 aa).

The chain crosses the membrane as a helical span at residues phenylalanine 7 to asparagine 27.

Belongs to the asfivirus E146L family.

Its subcellular location is the host membrane. The protein localises to the virion. This is an uncharacterized protein from Ornithodoros (relapsing fever ticks).